Reading from the N-terminus, the 373-residue chain is Dual-specificity RNA methyltransferase RlmN (373 aa).

Residue E94 is the Proton acceptor of the active site. The Radical SAM core domain maps to 100 to 339 (EDDRATLCVS…VIVRKTRGDD (240 aa)). A disulfide bridge links C107 with C344. 3 residues coordinate [4Fe-4S] cluster: C114, C118, and C121. Residues 168–169 (GE), S200, 222–224 (SIH), and N301 contribute to the S-adenosyl-L-methionine site. The active-site S-methylcysteine intermediate is the C344.

It belongs to the radical SAM superfamily. RlmN family. Requires [4Fe-4S] cluster as cofactor.

It is found in the cytoplasm. It catalyses the reaction adenosine(2503) in 23S rRNA + 2 reduced [2Fe-2S]-[ferredoxin] + 2 S-adenosyl-L-methionine = 2-methyladenosine(2503) in 23S rRNA + 5'-deoxyadenosine + L-methionine + 2 oxidized [2Fe-2S]-[ferredoxin] + S-adenosyl-L-homocysteine. It carries out the reaction adenosine(37) in tRNA + 2 reduced [2Fe-2S]-[ferredoxin] + 2 S-adenosyl-L-methionine = 2-methyladenosine(37) in tRNA + 5'-deoxyadenosine + L-methionine + 2 oxidized [2Fe-2S]-[ferredoxin] + S-adenosyl-L-homocysteine. In terms of biological role, specifically methylates position 2 of adenine 2503 in 23S rRNA and position 2 of adenine 37 in tRNAs. m2A2503 modification seems to play a crucial role in the proofreading step occurring at the peptidyl transferase center and thus would serve to optimize ribosomal fidelity. The protein is Dual-specificity RNA methyltransferase RlmN of Shewanella denitrificans (strain OS217 / ATCC BAA-1090 / DSM 15013).